The primary structure comprises 133 residues: Inhibitor of g-type lysozyme (133 aa).

The first 22 residues, 1–22 (MKIKSIRKAVLLLALLTSTSFA), serve as a signal peptide directing secretion.

It localises to the periplasm. In terms of biological role, inhibits activity of g-type lysozyme, which confers increased lysozyme tolerance to the bacterium. In Escherichia coli (strain K12), this protein is Inhibitor of g-type lysozyme (pliG).